The primary structure comprises 168 residues: Large ribosomal subunit protein uL10 (168 aa).

It belongs to the universal ribosomal protein uL10 family. As to quaternary structure, part of the ribosomal stalk of the 50S ribosomal subunit. The N-terminus interacts with L11 and the large rRNA to form the base of the stalk. The C-terminus forms an elongated spine to which L12 dimers bind in a sequential fashion forming a multimeric L10(L12)X complex.

In terms of biological role, forms part of the ribosomal stalk, playing a central role in the interaction of the ribosome with GTP-bound translation factors. This Clostridioides difficile (strain 630) (Peptoclostridium difficile) protein is Large ribosomal subunit protein uL10.